Here is a 596-residue protein sequence, read N- to C-terminus: Ran GTPase-activating protein (596 aa).

LRR repeat units lie at residues 44 to 71 (QTTV…GLKR), 107 to 134 (GAKL…LLRS), 137 to 164 (CYSL…ALID), 203 to 230 (LKTF…SFKH), 231 to 258 (NPHL…ALPF), and 259 to 286 (LPLL…ALER). The disordered stretch occupies residues 355–418 (HQEEEDLEDE…EYSNVAEETA (64 aa)). The span at 387–410 (TTEEADEDSEGDEDDEEDEGDEEY) shows a compositional bias: acidic residues. Phosphothreonine occurs at positions 433 and 434. S436 carries the post-translational modification Phosphoserine.

This sequence belongs to the RNA1 family. As to quaternary structure, forms a complex with Nup358/RanBP2, sbr/Nxf1 and Nxt1. Associates with the nuclear pore complex via its interaction with Nup358/RanBP2. As to expression, both full-length and truncated protein are expressed in testis (at protein level). Expressed in oocytes and nurse cells (at protein level).

Its subcellular location is the cytoplasm. The protein localises to the nucleus membrane. In terms of biological role, GTPase activator for the nuclear Ras-related regulatory protein Ran, converting it to the putatively inactive GDP-bound state. Trans-acting factor necessary for meiotic distortion. Distortion is only seen in individuals that carry the RanGAP tandem duplication and express a RanGAP truncated protein. Binding of truncated RanGAP product to the Responder(RSP) locus initiates events that lead to sperm dysfunction. During oogenesis, plays a role in the biogenesis of annulate lamellae containing nuclear pore complex components. This chain is Ran GTPase-activating protein (RanGAP), found in Drosophila melanogaster (Fruit fly).